A 315-amino-acid chain; its full sequence is Serpentine receptor class delta-31 (315 aa).

Transmembrane regions (helical) follow at residues 6–26 (LHSI…YLAI), 38–58 (AIIT…FFVM), 83–103 (ACYV…IWMI), 124–144 (VFVA…WFSI), 174–194 (ITLI…YIWI), 225–245 (FQVF…SMFT), and 256–276 (AISV…ILFV).

It belongs to the nematode receptor-like protein srd family.

The protein localises to the membrane. The polypeptide is Serpentine receptor class delta-31 (srd-31) (Caenorhabditis elegans).